We begin with the raw amino-acid sequence, 256 residues long: 5-oxoprolinase subunit A (256 aa).

It belongs to the LamB/PxpA family. As to quaternary structure, forms a complex composed of PxpA, PxpB and PxpC.

It catalyses the reaction 5-oxo-L-proline + ATP + 2 H2O = L-glutamate + ADP + phosphate + H(+). In terms of biological role, catalyzes the cleavage of 5-oxoproline to form L-glutamate coupled to the hydrolysis of ATP to ADP and inorganic phosphate. This is 5-oxoprolinase subunit A from Geobacillus thermodenitrificans (strain NG80-2).